A 639-amino-acid polypeptide reads, in one-letter code: MGKIIGIDLGTTNSCVAVMQGTQPTVIENSEGNRTTPSMVAVTKTGDRLVGQAAKRQAITNPKNTVFSIKRFMGRKYDEVPNEKKLASYDVINEGGEARVKINDKIYSPQEVSAMILQKMKQTAEDFLGEKVTEAVITVPAYFNDAQRQATKDAGRIAGLDVKRIINEPTAAALAYGLDKKMSSEKVAVFDLGGGTFDISILELGDGVFEVKSTDGDTHLGGDDFDQKIIDYLADEFKKQEGIDLRNDAIALQRLKEAAEKAKVELSSRTDTEINLPFITATQEGPKHLVINLTRAKFEAMCADLFEKILEPCHRAVKNSKLDMKEIDEVVLVGGSTRIPKVQTLVKEFFGKEPNRSVNPDEVVAIGAAIQGGVLKGDVTDVLLLDVSPLSLGIETLGGVMTRLIEANTTIPTRKQEVFSTAADSQTSVEVHVLQGERPMASDNKTLGRFHLGDIPPAPRGVPQIEVTFDIDSNGILSVSAKDKATGKEQTIRIEASGKLNDAEIEKMKQDAKEHAAEDQKKKEEIDIRNSADSLIFSTEKQLTELGDKIPADKKPRLEGSLEKLKEAYKNGTAESIKSAMDDLNKEWSDIASSLYQTPDAGAPGASGPSAGGEPETGKKGGDGEVQNAEYEVIDGNDK.

Thr196 is subject to Phosphothreonine; by autocatalysis. The disordered stretch occupies residues 592–639 (ASSLYQTPDAGAPGASGPSAGGEPETGKKGGDGEVQNAEYEVIDGNDK). Low complexity predominate over residues 601-613 (AGAPGASGPSAGG).

It belongs to the heat shock protein 70 family.

Functionally, acts as a chaperone. In Chlorobium limicola (strain DSM 245 / NBRC 103803 / 6330), this protein is Chaperone protein DnaK.